Here is a 375-residue protein sequence, read N- to C-terminus: Alcohol dehydrogenase 1 (375 aa).

Residue Ser1 is modified to N-acetylserine. Residues Cys46, His67, Cys97, Cys100, Cys103, Cys111, and Cys175 each coordinate Zn(2+). Residues 200–205 (GLGGVG), Asp224, Lys229, 293–295 (VGV), and Arg370 contribute to the NAD(+) site.

Belongs to the zinc-containing alcohol dehydrogenase family. Class-I subfamily. As to quaternary structure, homodimer. It depends on Zn(2+) as a cofactor.

The protein localises to the cytoplasm. The catalysed reaction is a primary alcohol + NAD(+) = an aldehyde + NADH + H(+). The enzyme catalyses a secondary alcohol + NAD(+) = a ketone + NADH + H(+). The sequence is that of Alcohol dehydrogenase 1 (ADH1) from Coturnix japonica (Japanese quail).